The following is a 366-amino-acid chain: Proline-rich protein 19 (366 aa).

4 disordered regions span residues Met1–Cys53, Glu102–Val149, Thr256–Gly286, and Ala301–Asn338. The segment covering Gly18 to Arg29 has biased composition (basic residues). Composition is skewed to polar residues over residues His104 to Ser113 and Thr256 to Gln265. The span at Ser275–Gly286 shows a compositional bias: low complexity. The span at Thr302–Leu326 shows a compositional bias: pro residues.

In terms of assembly, interacts with CNTD1. Preferentially expressed in gonads.

It localises to the nucleus. The protein resides in the chromosome. Promotes meiotic crossing over formation through its interaction with CNTD1 by participating in the crossover differentiation step of crossover-specific recombination intermediates. The polypeptide is Proline-rich protein 19 (Mus musculus (Mouse)).